Reading from the N-terminus, the 508-residue chain is Protein O-glucosyltransferase 3 (508 aa).

Positions 1–24 (MLGVRRALLLPPLQLALLVAAGTG) are cleaved as a signal peptide. The Filamin repeat unit spans residues 25–134 (ARVSAPRSLA…VAQSPYILKG (110 aa)). N-linked (GlcNAc...) asparagine glycosylation occurs at Asn-307. The interval 480-508 (RDGMERVPQPDDSTSVRQCHRKRPEREEL) is disordered. A Prevents secretion from ER motif is present at residues 505–508 (REEL).

Belongs to the KDELC family.

Its subcellular location is the endoplasmic reticulum lumen. It carries out the reaction L-seryl-[EGF-like domain protein] + UDP-alpha-D-glucose = 3-O-(beta-D-glucosyl)-L-seryl-[EGF-like domain protein] + UDP + H(+). It catalyses the reaction L-seryl-[EGF-like domain protein] + UDP-alpha-D-xylose = 3-O-(beta-D-xylosyl)-L-seryl-[EGF-like domain protein] + UDP + H(+). It participates in protein modification; protein glycosylation. Its function is as follows. Protein glucosyltransferase that catalyzes the transfer of glucose from UDP-glucose to a serine residue within the consensus sequence peptide C-X-N-T-X-G-S-F-X-C. Can also catalyze the transfer of xylose from UDP-xylose but less efficiently. Specifically targets extracellular EGF repeats of proteins such as NOTCH1, NOTCH3, FBN1, FBN2 and LTBP1. May regulate the transport of NOTCH1 and NOTCH3 to the plasma membrane and thereby the Notch signaling pathway. This is Protein O-glucosyltransferase 3 (Poglut3) from Rattus norvegicus (Rat).